We begin with the raw amino-acid sequence, 422 residues long: Tyrosine--tRNA ligase (422 aa).

L-tyrosine is bound at residue Tyr37. The 'HIGH' region signature appears at 42–51; it reads PTEESLHIGH. Positions 175 and 179 each coordinate L-tyrosine. The 'KMSKS' region motif lies at 235-239; it reads KFGKT. Residue Lys238 coordinates ATP. The S4 RNA-binding domain maps to 357–414; it reads KDLQEALVLTSLAQSRTQAKNMIISNSISINTEKIRKNHIFHEKDKLFGKFTLLSRGK.

The protein belongs to the class-I aminoacyl-tRNA synthetase family. TyrS type 1 subfamily. Homodimer.

The protein localises to the cytoplasm. The enzyme catalyses tRNA(Tyr) + L-tyrosine + ATP = L-tyrosyl-tRNA(Tyr) + AMP + diphosphate + H(+). In terms of biological role, catalyzes the attachment of tyrosine to tRNA(Tyr) in a two-step reaction: tyrosine is first activated by ATP to form Tyr-AMP and then transferred to the acceptor end of tRNA(Tyr). The polypeptide is Tyrosine--tRNA ligase (Buchnera aphidicola subsp. Acyrthosiphon pisum (strain Tuc7)).